The sequence spans 396 residues: MSVRLVLAKGREKSLLRRHPWVFSGAVARMEGKASLGETIDIVDHQGKWLARGAYSPASQIRARVWTFDPSESIDIAFFSRRLQQAQKWRDWLAQKDGLDSYRLIAGESDGLPGITIDRFGNFLVLQLLSAGAEYQRAALISALQTLYPECAIYDRSDVAVRKKEGMELTQGLVTGELPPALLPIEEHGMKLLVDIQHGHKTGYYLDQRDSRLATRRYVENKRVLNCFSYTGGFAVSALMGGCSQVVSVDTSQEALDIARQNVELNKLDLSKAEFVRDDVFKLLRTYRDRGEKFDVIVMDPPKFVENKSQLMGACRGYKDINMLAIQLLNEGGILLTFSCSGLMTSDLFQKIIADAAIDAGRDVQFIEQFRQAADHPVIATYPEGLYLKGFACRVM.

Residues 2–81 enclose the PUA domain; that stretch reads SVRLVLAKGR…ESIDIAFFSR (80 aa).

This sequence belongs to the methyltransferase superfamily. RlmI family.

The protein resides in the cytoplasm. The catalysed reaction is cytidine(1962) in 23S rRNA + S-adenosyl-L-methionine = 5-methylcytidine(1962) in 23S rRNA + S-adenosyl-L-homocysteine + H(+). Its function is as follows. Specifically methylates the cytosine at position 1962 (m5C1962) of 23S rRNA. The chain is Ribosomal RNA large subunit methyltransferase I from Escherichia coli O157:H7.